Reading from the N-terminus, the 1167-residue chain is Tight junction protein 2 (1167 aa).

Positions 10–97 constitute a PDZ 1 domain; that stretch reads TVTLQKDSKR…IAAIVVKRPR (88 aa). Residues Ser107, Ser127, Ser130, Ser140, Ser145, Ser147, Ser173, Ser194, Ser205, and Ser239 each carry the phosphoserine modification. A disordered region spans residues 129 to 195; the sequence is RSGYSERSRH…SRERSRGRSL (67 aa). The disordered stretch occupies residues 225-286; the sequence is SYHEAYEPDY…KGQHDPDRPI (62 aa). Residues 242–262 are compositionally biased toward basic and acidic residues; sequence YDRRAHPETRYERSRSREHLR. The PDZ 2 domain occupies 287 to 365; it reads GVLLTKSKAN…KLQLVVLRDS (79 aa). 8 positions are modified to phosphoserine: Ser305, Ser378, Ser380, Ser386, Ser395, Ser404, Ser410, and Ser411. The segment at 381 to 485 is disordered; sequence EVEDISEIES…LRPSPEDEAI (105 aa). A compositionally biased stretch (basic and acidic residues) spans 395–426; it reads SPEERRQQYSDQDYHSSTEKLKERPSSREETS. At Thr435 the chain carries Phosphothreonine. Ser479 carries the post-translational modification Phosphoserine. One can recognise a PDZ 3 domain in the interval 489–570; the sequence is NTKMVRFKKG…GETVTILAQS (82 aa). Tyr554 bears the Phosphotyrosine mark. The region spanning 584-649 is the SH3 domain; the sequence is GDSFFIRSHF…PNKSRAEQMA (66 aa). One can recognise a Guanylate kinase-like domain in the interval 660–858; the sequence is GDRADFWRMR…WFGSLKDSIQ (199 aa). Residues Ser684 and Ser884 each carry the phosphoserine modification. The residue at position 887 (Thr887) is a Phosphothreonine. A phosphoserine mark is found at Ser895 and Ser902. Disordered stretches follow at residues 904–1055 and 1095–1167; these read FEDT…PRSV and YAVP…DTEL. Thr907 and Thr915 each carry phosphothreonine. Residues 938 to 949 show a composition bias toward basic and acidic residues; it reads VQHEENIRKSSP. Ser948, Ser960, Ser968, Ser988, and Ser1044 each carry phosphoserine. Residues 976-990 are compositionally biased toward basic and acidic residues; sequence EPPKARSQNREDSFD. The segment covering 1037–1049 has biased composition (acidic residues); sequence ESEEVGESTEEQE. Tyr1095 carries the post-translational modification Phosphotyrosine. Phosphoserine is present on residues Ser1124 and Ser1136. The interval 1165-1167 is interaction with SCRIB; the sequence is TEL.

Belongs to the MAGUK family. Homodimer. Interacts (via PDZ2 domain) with TJP1/ZO1 (via PDZ2 domain). Interacts with UBN1. Interacts with SCRIB. Interacts with OCLN. Interacts with SAFB in the nucleus. Interacts with USP53 (via the C-terminal region). Interacts with claudins, including CLDN1, CLDN2, CLDN3, CLDN5 and CLDN7. Interacts with CLDN18. Interacts (via N-terminus) with CTNNA1.

It is found in the cell junction. Its subcellular location is the adherens junction. The protein localises to the cell membrane. The protein resides in the nucleus. It localises to the tight junction. In terms of biological role, plays a role in tight junctions and adherens junctions. Acts as a positive regulator of RANKL-induced osteoclast differentiation, potentially via mediating downstream transcriptional activity. The polypeptide is Tight junction protein 2 (Mus musculus (Mouse)).